The primary structure comprises 203 residues: Endo-type membrane-bound lytic murein transglycosylase A (203 aa).

A signal peptide spans 1–15 (MKLRWLLILVVFLAG). C16 is lipidated: N-palmitoyl cysteine. C16 carries the S-diacylglycerol cysteine lipid modification.

The protein belongs to the transglycosylase Slt family.

The protein localises to the cell outer membrane. It carries out the reaction Endolytic cleavage of the (1-&gt;4)-beta-glycosidic linkage between N-acetylmuramic acid (MurNAc) and N-acetylglucosamine (GlcNAc) residues in peptidoglycan with concomitant formation of a 1,6-anhydrobond in the MurNAc residue.. Functionally, murein-degrading enzyme. May play a role in recycling of muropeptides during cell elongation and/or cell division. Preferentially cleaves at a distance of more than two disaccharide units from the ends of the glycan chain. The chain is Endo-type membrane-bound lytic murein transglycosylase A from Klebsiella pneumoniae subsp. pneumoniae (strain ATCC 700721 / MGH 78578).